A 393-amino-acid chain; its full sequence is STE20-related kinase adapter protein alpha (393 aa).

S2 and S9 each carry phosphoserine. The 310-residue stretch at 32–341 folds into the Protein kinase domain; sequence YELLSVIGKG…ASTLLNHSFF (310 aa). At T381 the chain carries Phosphothreonine; by LKB1.

Belongs to the protein kinase superfamily. STE Ser/Thr protein kinase family. STE20 subfamily. Component of a trimeric complex composed of STK11/LKB1, STRAD (STRADA or STRADB) and CAB39/MO25 (CAB39/MO25alpha or CAB39L/MO25beta): the complex tethers STK11/LKB1 in the cytoplasm and stimulates its catalytic activity. In terms of tissue distribution, expressed in liver.

It is found in the nucleus. The protein resides in the cytoplasm. Its function is as follows. Pseudokinase which, in complex with CAB39/MO25 (CAB39/MO25alpha or CAB39L/MO25beta), binds to and activates STK11/LKB1. Adopts a closed conformation typical of active protein kinases and binds STK11/LKB1 as a pseudosubstrate, promoting conformational change of STK11/LKB1 in an active conformation. The polypeptide is STE20-related kinase adapter protein alpha (Strada) (Rattus norvegicus (Rat)).